Consider the following 557-residue polypeptide: Potassium-transporting ATPase potassium-binding subunit (557 aa).

The next 12 helical transmembrane spans lie at Gly-5–Ser-25, Leu-63–Gly-83, Gly-132–Ile-152, Leu-170–Ile-190, Phe-253–Val-273, Leu-283–Val-303, Val-329–Ala-349, Ala-356–Val-376, Gly-379–Gly-399, Leu-416–Met-436, Leu-484–Ala-504, and Leu-526–Ala-546.

This sequence belongs to the KdpA family. The system is composed of three essential subunits: KdpA, KdpB and KdpC.

The protein resides in the cell inner membrane. Its function is as follows. Part of the high-affinity ATP-driven potassium transport (or Kdp) system, which catalyzes the hydrolysis of ATP coupled with the electrogenic transport of potassium into the cytoplasm. This subunit binds the periplasmic potassium ions and delivers the ions to the membrane domain of KdpB through an intramembrane tunnel. In Shigella boydii serotype 4 (strain Sb227), this protein is Potassium-transporting ATPase potassium-binding subunit.